The primary structure comprises 93 residues: MTRKKMNPFVAHHLLAKIEKVNMKEEKETIVTWSRASSILPTMVGHTIAIHNGKEHIPIYITNPMVGRKLGEFVPTRHFTSYENARKDTKSRR.

Belongs to the universal ribosomal protein uS19 family.

The protein localises to the plastid. It localises to the chloroplast. Its function is as follows. Protein S19 forms a complex with S13 that binds strongly to the 16S ribosomal RNA. In Lolium perenne (Perennial ryegrass), this protein is Small ribosomal subunit protein uS19c.